The sequence spans 427 residues: Glutamate-1-semialdehyde 2,1-aminomutase (427 aa).

The residue at position 264 (Lys-264) is an N6-(pyridoxal phosphate)lysine.

This sequence belongs to the class-III pyridoxal-phosphate-dependent aminotransferase family. HemL subfamily. Homodimer. Pyridoxal 5'-phosphate is required as a cofactor.

It is found in the cytoplasm. It catalyses the reaction (S)-4-amino-5-oxopentanoate = 5-aminolevulinate. The protein operates within porphyrin-containing compound metabolism; protoporphyrin-IX biosynthesis; 5-aminolevulinate from L-glutamyl-tRNA(Glu): step 2/2. This Clostridium botulinum (strain Eklund 17B / Type B) protein is Glutamate-1-semialdehyde 2,1-aminomutase.